Here is a 326-residue protein sequence, read N- to C-terminus: DNA polymerase III subunit delta' (326 aa).

As to quaternary structure, DNA polymerase III contains a core (composed of alpha, epsilon and theta chains) that associates with a tau subunit. This core dimerizes to form the POLIII' complex. PolIII' associates with the gamma complex (composed of gamma, delta, delta', psi and chi chains) and with the beta chain to form the complete DNA polymerase III complex.

It carries out the reaction DNA(n) + a 2'-deoxyribonucleoside 5'-triphosphate = DNA(n+1) + diphosphate. Its function is as follows. DNA polymerase III is a complex, multichain enzyme responsible for most of the replicative synthesis in bacteria. This DNA polymerase also exhibits 3' to 5' exonuclease activity. This chain is DNA polymerase III subunit delta' (holB), found in Buchnera aphidicola subsp. Acyrthosiphon pisum (strain APS) (Acyrthosiphon pisum symbiotic bacterium).